The primary structure comprises 350 residues: Phosphotriesterase-related protein (350 aa).

Histidine 22, histidine 24, glutamate 169, histidine 201, histidine 230, and aspartate 298 together coordinate a divalent metal cation.

The protein belongs to the metallo-dependent hydrolases superfamily. Phosphotriesterase family. A divalent metal cation serves as cofactor.

The sequence is that of Phosphotriesterase-related protein from Drosophila mojavensis (Fruit fly).